Here is a 940-residue protein sequence, read N- to C-terminus: Isoleucine--tRNA ligase (940 aa).

Positions 59–69 match the 'HIGH' region motif; sequence PYANGDIHIGH. Glu-563 provides a ligand contact to L-isoleucyl-5'-AMP. The 'KMSKS' region signature appears at 604-608; sequence KMSKS. An ATP-binding site is contributed by Lys-607. Zn(2+) is bound by residues Cys-903, Cys-906, Cys-923, and Cys-926.

Belongs to the class-I aminoacyl-tRNA synthetase family. IleS type 1 subfamily. In terms of assembly, monomer. It depends on Zn(2+) as a cofactor.

The protein resides in the cytoplasm. It carries out the reaction tRNA(Ile) + L-isoleucine + ATP = L-isoleucyl-tRNA(Ile) + AMP + diphosphate. In terms of biological role, catalyzes the attachment of isoleucine to tRNA(Ile). As IleRS can inadvertently accommodate and process structurally similar amino acids such as valine, to avoid such errors it has two additional distinct tRNA(Ile)-dependent editing activities. One activity is designated as 'pretransfer' editing and involves the hydrolysis of activated Val-AMP. The other activity is designated 'posttransfer' editing and involves deacylation of mischarged Val-tRNA(Ile). The protein is Isoleucine--tRNA ligase of Wigglesworthia glossinidia brevipalpis.